A 432-amino-acid polypeptide reads, in one-letter code: Adenylosuccinate synthetase 2 (432 aa).

Residues 13–19 (GDEGKGK) and 41–43 (GHT) each bind GTP. The Proton acceptor role is filled by Asp14. Residues Asp14 and Gly41 each contribute to the Mg(2+) site. IMP is bound by residues 14–17 (DEGK), 39–42 (NAGH), Thr130, Arg144, Gln225, Thr240, and Arg304. Residue His42 is the Proton donor of the active site. 300-306 (ATTGRSR) serves as a coordination point for substrate. Residues Arg306, 332-334 (KLD), and 415-417 (STG) contribute to the GTP site.

Belongs to the adenylosuccinate synthetase family. In terms of assembly, homodimer. Mg(2+) serves as cofactor.

The protein localises to the cytoplasm. It catalyses the reaction IMP + L-aspartate + GTP = N(6)-(1,2-dicarboxyethyl)-AMP + GDP + phosphate + 2 H(+). Its pathway is purine metabolism; AMP biosynthesis via de novo pathway; AMP from IMP: step 1/2. In terms of biological role, plays an important role in the de novo pathway of purine nucleotide biosynthesis. Catalyzes the first committed step in the biosynthesis of AMP from IMP. The protein is Adenylosuccinate synthetase 2 of Photorhabdus laumondii subsp. laumondii (strain DSM 15139 / CIP 105565 / TT01) (Photorhabdus luminescens subsp. laumondii).